Here is a 217-residue protein sequence, read N- to C-terminus: Insulin-like growth factor 2.L (217 aa).

The first 56 residues, 1-56 (MEQLSCKHRSSSMEAEAQLCRQTESRSTQLPRMSVMRHLFLLSITFLVYTLDSAKA), serve as a signal peptide directing secretion. The interval 57–83 (YRPTETLCGGELVDTLQFVCGDRGFYF) is b. 3 cysteine pairs are disulfide-bonded: cysteine 64-cysteine 103, cysteine 76-cysteine 116, and cysteine 102-cysteine 107. The tract at residues 84 to 96 (STNNGRSNRRSNR) is c. Residues 97-117 (GIVEECCFRSCDLELLETYCA) are a. Residues 118–123 (KPSKNE) form a d region. Positions 124 to 217 (RDVSTAPATA…LQQTSEPSHN (94 aa)) are cleaved as a propeptide — e peptide.

This sequence belongs to the insulin family.

The protein localises to the secreted. Its function is as follows. The insulin-like growth factors, isolated from plasma, are structurally and functionally related to insulin but have a much higher growth-promoting activity. Promotes anterior neural development. Acts as a ligand for integrin which is required for IGF2 signaling. In Xenopus laevis (African clawed frog), this protein is Insulin-like growth factor 2.L.